A 199-amino-acid chain; its full sequence is Peroxiredoxin-1 (199 aa).

Serine 2 carries the post-translational modification N-acetylserine. A Thioredoxin domain is found at 6 to 165 (AKIGYPAPNF…ILRLVQAFQF (160 aa)). Lysine 7 is modified (N6-acetyllysine; alternate). Lysine 7 participates in a covalent cross-link: Glycyl lysine isopeptide (Lys-Gly) (interchain with G-Cter in SUMO2); alternate. At lysine 16 the chain carries N6-acetyllysine. A Phosphoserine modification is found at serine 32. The active-site Cysteine sulfenic acid (-SOH) intermediate is the cysteine 52. At threonine 90 the chain carries Phosphothreonine. A Glycyl lysine isopeptide (Lys-Gly) (interchain with G-Cter in SUMO2) cross-link involves residue lysine 120. Lysine 136 bears the N6-acetyllysine mark. The interval 176-199 (GWKPGSDTIKPDVQKSKEYFSKQK) is disordered. Over residues 184-199 (IKPDVQKSKEYFSKQK) the composition is skewed to basic and acidic residues. Lysine 185 is covalently cross-linked (Glycyl lysine isopeptide (Lys-Gly) (interchain with G-Cter in SUMO1)). At lysine 197 the chain carries N6-acetyllysine.

It belongs to the peroxiredoxin family. AhpC/Prx1 subfamily. In terms of assembly, homodimer; disulfide-linked, upon oxidation. 5 homodimers assemble to form a ring-like decamer. Interacts with GDPD5; forms a mixed-disulfide with GDPD5. Interacts with SESN1 and SESN2. Interacts with FAM107A. In terms of processing, phosphorylated on Thr-90 during the M-phase, which leads to a decrease in enzymatic activity. Acetylation increases reducing activity and resistance to superoxidation. Deacetylated by HDAC6 which decreases reducing activity.

Its subcellular location is the cytoplasm. The catalysed reaction is a hydroperoxide + [thioredoxin]-dithiol = an alcohol + [thioredoxin]-disulfide + H2O. Its function is as follows. Thiol-specific peroxidase that catalyzes the reduction of hydrogen peroxide and organic hydroperoxides to water and alcohols, respectively. Plays a role in cell protection against oxidative stress by detoxifying peroxides and as sensor of hydrogen peroxide-mediated signaling events. Might participate in the signaling cascades of growth factors and tumor necrosis factor-alpha by regulating the intracellular concentrations of H(2)O(2). Reduces an intramolecular disulfide bond in GDPD5 that gates the ability to GDPD5 to drive postmitotic motor neuron differentiation. This chain is Peroxiredoxin-1 (PRDX1), found in Cricetulus griseus (Chinese hamster).